Reading from the N-terminus, the 102-residue chain is Small ribosomal subunit protein uS10 (102 aa).

It belongs to the universal ribosomal protein uS10 family. Part of the 30S ribosomal subunit.

Its function is as follows. Involved in the binding of tRNA to the ribosomes. This chain is Small ribosomal subunit protein uS10, found in Methanococcus maripaludis (strain C7 / ATCC BAA-1331).